A 690-amino-acid chain; its full sequence is DNA-directed RNA polymerase subunit beta' (690 aa).

Residues Cys76, Cys78, Cys94, and Cys97 each coordinate Zn(2+). Asp496, Asp498, and Asp500 together coordinate Mg(2+).

The protein belongs to the RNA polymerase beta' chain family. RpoC1 subfamily. As to quaternary structure, in plastids the minimal PEP RNA polymerase catalytic core is composed of four subunits: alpha, beta, beta', and beta''. When a (nuclear-encoded) sigma factor is associated with the core the holoenzyme is formed, which can initiate transcription. Mg(2+) is required as a cofactor. The cofactor is Zn(2+).

Its subcellular location is the plastid. The protein localises to the chloroplast. The catalysed reaction is RNA(n) + a ribonucleoside 5'-triphosphate = RNA(n+1) + diphosphate. In terms of biological role, DNA-dependent RNA polymerase catalyzes the transcription of DNA into RNA using the four ribonucleoside triphosphates as substrates. The protein is DNA-directed RNA polymerase subunit beta' of Lemna minor (Common duckweed).